The sequence spans 1032 residues: Unconventional myosin-Ih (1032 aa).

Residues 12–701 (GVQDFVLLDA…TLFATEDAFE (690 aa)) form the Myosin motor domain. Residue 105–112 (GESGAGKT) coordinates ATP. A Phosphoserine modification is found at Ser365. The tract at residues 578 to 600 (LSSLLETLISKEPSYIRCIKPND) is actin-binding. 2 consecutive IQ domains span residues 704–726 (KHQL…EYVK) and 727–756 (KRQA…AVRI). One can recognise a TH1 domain in the interval 855–1029 (KDGYTESLNQ…NGQLTVVSVR (175 aa)).

Belongs to the TRAFAC class myosin-kinesin ATPase superfamily. Myosin family.

In terms of biological role, myosins are actin-based motor molecules with ATPase activity. Unconventional myosins serve in intracellular movements. Their highly divergent tails are presumed to bind to membranous compartments, which would be moved relative to actin filaments. This Homo sapiens (Human) protein is Unconventional myosin-Ih (MYO1H).